The primary structure comprises 496 residues: DNA-directed DNA/RNA polymerase mu (496 aa).

Residues 1-22 are disordered; the sequence is MLPKRRRVRAGSPHSAVASSTP. Ser-12 is modified (phosphoserine). A compositionally biased stretch (low complexity) spans 12–22; it reads SPHSAVASSTP. In terms of domain architecture, BRCT spans 23–122; sequence PSVVRFPDVA…QPVPEEGRHH (100 aa). Residues Thr-241 and Val-243 each contribute to the Na(+) site. The tract at residues 323–332 is involved in ssDNA binding; sequence RGKLQGHDVD. Mg(2+) contacts are provided by Asp-330, Asp-332, and Asp-420.

It belongs to the DNA polymerase type-X family. Mg(2+) is required as a cofactor.

Its subcellular location is the nucleus. It carries out the reaction DNA(n) + a 2'-deoxyribonucleoside 5'-triphosphate = DNA(n+1) + diphosphate. In terms of biological role, gap-filling polymerase involved in repair of DNA double-strand breaks by non-homologous end joining (NHEJ). Participates in immunoglobulin (Ig) light chain gene rearrangement in V(D)J recombination. This chain is DNA-directed DNA/RNA polymerase mu (Polm), found in Mus musculus (Mouse).